We begin with the raw amino-acid sequence, 1263 residues long: MPFISETASAIKRRFGFNDRPAPSESLRSVPCTPEANTVSRDNHTHQSLLFSSAVRSMPELDEDGAICAGSAQISRSQSFEFNEDPAFWKDHNVQVIIRTRPLSSSEISVQGNNKCVRQDNGQAITWIGNPESRFTFDLVADENVSQEQMFKVAGVPMVENVVAGYNSCMFAYGQTGSGKTHTMLGDIEGGTRRHSVNCGMTPRVFEYLFSRIQKEKEVRKEEKLHFTCRCSFLEIYNEQILDLLDPSSYNLQLREDHKKGIHVENLKEIEVSSARDVIQQLMQGAANRKVAATNMNRASSRSHSVFTCIIESKWVSQGVTHHRFARLNLVDLAGSERQKSSGAEGERLKEATNINKSLSTLGLVIMNLVSVSNGKSVHVPYRDSKLTFLLQDSLGGNSKTIIIANISPSSSCSLETLSTLKFAQRAKLIKNNAIVNEDASGDVIAMRLQIQQLKKEVTRLRGMGGVDNQDMDTISMGCPASPMSLKWDGFNGSFTPLTTHKRMSKVKDYEVALVGAFRREREKDVALQALTAENEASMKLEKKREDEIRGLKMMLKLRDSAIKSLQGVTSGKIPVEAHLQKEKGDLMKEIEVLRAQVDRNQEVTKFATENLRLKEEIRRLKSQGEEGERDILNQQIQALQAKLLEALDWKLMHESDSSMVKEDGNISNMFCSNQNQESKKLSSIQDENEFLRMQAIQNRAEMESLQKSLSFSLDEKERLQKLVDNLSNELEGKIRSSGMVGDDDQMEVKTMVQAIACVSQREAEAHETAIKLSKENDDLRQKIKVLIEDNNKLIELYEQVAEENSSRAWGKIETDSSSNNADAQNSAEIALEVEKSAAEEQKKMIGNLENQLTEMHDENEKLMSLYENAMKEKDELKRLLSSPDQKKPIEANSDTEMELCNISSEKSTEDLNSAKLKLELAQEKLSISAKTIGVFSSLEENILDIIKLSKESKETEEKVKEHQSELGSIKTVSDQTNARKEVAEKKLAALRCSLSNFASSAVYFQQREERARAHVNSFSGYLNQKNEELDVIRSHKREIDAAMGKIQQSEAELKSNIVMLKIKVDEENKRHEEEGVLCTIDNILRTGKATDLLKSQEEKTKLQSEMKLSREKLASVRKEVDDMTKKSLKLEKEIKTMETEIEKSSKTRTESEMELENTIQEKQTIQEMEEQGMSEIQNMIIEIHQLVFESDLRKEEAMIIREELIAEELRAKDVHTNMIERVENALKTLENQNNSVSGKIEEEVENVLSLVHEASRLLEVSH.

Residues 21 to 44 (PAPSESLRSVPCTPEANTVSRDNH) form a disordered region. A compositionally biased stretch (polar residues) spans 35 to 44 (EANTVSRDNH). Residues 93-430 (NVQVIIRTRP…LKFAQRAKLI (338 aa)) form the Kinesin motor domain. 174–181 (GQTGSGKT) lines the ATP pocket. 6 coiled-coil regions span residues 679–737 (SKKL…KIRS), 764–805 (AEAH…AEEN), 831–881 (ALEV…KRLL), 905–966 (SEKS…HQSE), 1091–1168 (TDLL…TIQE), and 1193–1251 (LRKE…VLSL).

The protein belongs to the TRAFAC class myosin-kinesin ATPase superfamily. Kinesin family. KIN-12 subfamily.

This chain is Kinesin-like protein KIN-12E, found in Arabidopsis thaliana (Mouse-ear cress).